Reading from the N-terminus, the 962-residue chain is Vacuolar membrane protease (962 aa).

At 1 to 15 the chain is on the cytoplasmic side; it reads MVSSRRGFNPIAFTP. A helical membrane pass occupies residues 16–36; the sequence is WPVTILSSLVYLALIIPIIVV. Residues 37–390 lie on the Vacuolar side of the membrane; that stretch reads HHLVPPAPKE…FQLNTLFGHS (354 aa). N-linked (GlcNAc...) asparagine glycans are attached at residues Asn-110 and Asn-113. Zn(2+) is bound by residues His-169 and Asp-181. Residue Glu-215 is the Proton acceptor of the active site. Zn(2+) contacts are provided by Glu-216, Glu-241, and His-314. The helical transmembrane segment at 391–411 threads the bilayer; sequence VALLVVAPLLLIITSVALFAV. Topologically, residues 412–440 are cytoplasmic; that stretch reads DKMYMFSMYTYISESGGQVSLYGLRGMFR. A helical transmembrane segment spans residues 441 to 461; the sequence is FPLILGISTALTIALAFLIMK. The Vacuolar portion of the chain corresponds to 462 to 472; the sequence is VNPFIIYSSPY. A helical membrane pass occupies residues 473 to 493; the sequence is AVWSMMLSTCMFFAWFISCVA. At 494 to 503 the chain is on the cytoplasmic side; sequence DFARPSALHR. The helical transmembrane segment at 504-524 threads the bilayer; that stretch reads AYSFSWMFGIMWVFLVIATVY. Topologically, residues 525 to 534 are vacuolar; sequence QKQHGIASSY. A helical membrane pass occupies residues 535 to 555; sequence FIVFYFAGVAVATWISYLELF. The Cytoplasmic portion of the chain corresponds to 556–667; sequence GLPKTQDYAR…WSIYLMSSAW (112 aa). Positions 568-617 are disordered; that stretch reads GRLSDRTPSSDSHFLAPSADELPSSSSAAGRDFNPEDVEDEEPTESTSLL. Residues 602–611 are compositionally biased toward acidic residues; it reads PEDVEDEEPT. Residues 668-688 form a helical membrane-spanning segment; sequence ILQFLLVAPIVIILLGQLGLF. Residues 689–704 lie on the Vacuolar side of the membrane; sequence LTSATYQIGADGGSQL. The chain crosses the membrane as a helical span at residues 705–725; sequence VIYIGIAVLSVLILLPLFPFI. Residues 726-731 lie on the Cytoplasmic side of the membrane; that stretch reads HRFTYH. A helical membrane pass occupies residues 732–752; sequence IPTFLLFILIGTLVYNLTAFP. Over 753-962 the chain is Vacuolar; it reads FSHSNRLKLA…LVEGSYSFKL (210 aa). Residue Asn-834 is glycosylated (N-linked (GlcNAc...) asparagine).

It belongs to the peptidase M28 family. Zn(2+) serves as cofactor.

It localises to the vacuole membrane. May be involved in vacuolar sorting and osmoregulation. The polypeptide is Vacuolar membrane protease (Arthroderma benhamiae (strain ATCC MYA-4681 / CBS 112371) (Trichophyton mentagrophytes)).